We begin with the raw amino-acid sequence, 1295 residues long: Phosphoribosylformylglycinamidine synthase (1295 aa).

The interval 305 to 327 is disordered; sequence WPGAATGSGGEIRDEGATGRGAK. Residues 307–318, 386–388, and Ala-678 contribute to the ATP site; these read GAATGSGGEIRD and TGY. 4 residues coordinate Mg(2+): Asp-679, Glu-718, Asn-722, and Asp-884. An ATP-binding site is contributed by Ser-886. The Glutamine amidotransferase type-1 domain occupies 1041–1295; that stretch reads KVAVLREQGG…IFRNARKQLG (255 aa). The active-site Nucleophile is the Cys-1135. Residues His-1260 and Glu-1262 contribute to the active site.

The protein in the N-terminal section; belongs to the FGAMS family. Monomer.

Its subcellular location is the cytoplasm. It catalyses the reaction N(2)-formyl-N(1)-(5-phospho-beta-D-ribosyl)glycinamide + L-glutamine + ATP + H2O = 2-formamido-N(1)-(5-O-phospho-beta-D-ribosyl)acetamidine + L-glutamate + ADP + phosphate + H(+). Its pathway is purine metabolism; IMP biosynthesis via de novo pathway; 5-amino-1-(5-phospho-D-ribosyl)imidazole from N(2)-formyl-N(1)-(5-phospho-D-ribosyl)glycinamide: step 1/2. In terms of biological role, phosphoribosylformylglycinamidine synthase involved in the purines biosynthetic pathway. Catalyzes the ATP-dependent conversion of formylglycinamide ribonucleotide (FGAR) and glutamine to yield formylglycinamidine ribonucleotide (FGAM) and glutamate. This chain is Phosphoribosylformylglycinamidine synthase, found in Salmonella choleraesuis (strain SC-B67).